An 88-amino-acid chain; its full sequence is CRISPR-associated endoribonuclease Cas2 3 (88 aa).

A Mg(2+)-binding site is contributed by D9.

Belongs to the CRISPR-associated endoribonuclease Cas2 protein family. As to quaternary structure, homodimer, forms a heterotetramer with a Cas1 homodimer. Mg(2+) is required as a cofactor.

Its function is as follows. CRISPR (clustered regularly interspaced short palindromic repeat), is an adaptive immune system that provides protection against mobile genetic elements (viruses, transposable elements and conjugative plasmids). CRISPR clusters contain sequences complementary to antecedent mobile elements and target invading nucleic acids. CRISPR clusters are transcribed and processed into CRISPR RNA (crRNA). Functions as a ssRNA-specific endoribonuclease. Involved in the integration of spacer DNA into the CRISPR cassette. The sequence is that of CRISPR-associated endoribonuclease Cas2 3 from Thermodesulfovibrio yellowstonii (strain ATCC 51303 / DSM 11347 / YP87).